The sequence spans 53 residues: Large ribosomal subunit protein eL40 (53 aa).

Belongs to the eukaryotic ribosomal protein eL40 family.

The protein is Large ribosomal subunit protein eL40 of Pyrobaculum islandicum (strain DSM 4184 / JCM 9189 / GEO3).